The sequence spans 492 residues: MVVSKSSPLIFERSKKGRYAYSLPKKEIDNGAVEKLLDDKFIRKNKAELPEVAELDLVRHYTELSNKNFGVDSGFYPLGSCTMKYNPKINEKIARIPGFAESHPLQDESQVQGSLEIIHSLQEELKEITGMDEVTLQPAAGAHGEWTALMIFKAFHQKNGEGHRDEVIVPDSAHGTNPASAAFAGFKAVTVKSNERGEVDIDDLKRVVNENTAAIMLTNPNTLGIFEKNIMDIRNIVHEAGGLLYYDGANLNAIMDKVRPGDMGFDAVHLNLHKTFTGPHGGGGPGSGPVGVKKELASFLPKPMVVKEDDVYKYDNDIENSIGRVKPFYGNFGIYLRAYTYIRTMGNKGLEEVSEAAVLNANYIKARLKDHFEIPYPQYCKHEFVLSGSKQKEHGVRTLDMAKRLLDFGVHPPTIYFPLNVEEGMMIEPTETESKETLDYFCDKMIEIANEAKEDPDKVLEAPHTTIIDRLDETKAARQPVLKFENLRSEKE.

K274 carries the post-translational modification N6-(pyridoxal phosphate)lysine.

This sequence belongs to the GcvP family. C-terminal subunit subfamily. The glycine cleavage system is composed of four proteins: P, T, L and H. In this organism, the P 'protein' is a heterodimer of two subunits. Pyridoxal 5'-phosphate serves as cofactor.

The enzyme catalyses N(6)-[(R)-lipoyl]-L-lysyl-[glycine-cleavage complex H protein] + glycine + H(+) = N(6)-[(R)-S(8)-aminomethyldihydrolipoyl]-L-lysyl-[glycine-cleavage complex H protein] + CO2. Its function is as follows. The glycine cleavage system catalyzes the degradation of glycine. The P protein binds the alpha-amino group of glycine through its pyridoxal phosphate cofactor; CO(2) is released and the remaining methylamine moiety is then transferred to the lipoamide cofactor of the H protein. In Staphylococcus saprophyticus subsp. saprophyticus (strain ATCC 15305 / DSM 20229 / NCIMB 8711 / NCTC 7292 / S-41), this protein is Probable glycine dehydrogenase (decarboxylating) subunit 2.